Consider the following 160-residue polypeptide: Phosphopantetheine adenylyltransferase (160 aa).

Substrate is bound at residue Ser-10. ATP contacts are provided by residues 10-11 (SF) and His-18. The substrate site is built by Lys-42, Leu-74, and Arg-88. ATP-binding positions include 89 to 91 (GLR), Glu-99, and 124 to 130 (YSFLSSS).

It belongs to the bacterial CoaD family. Homohexamer. It depends on Mg(2+) as a cofactor.

Its subcellular location is the cytoplasm. The catalysed reaction is (R)-4'-phosphopantetheine + ATP + H(+) = 3'-dephospho-CoA + diphosphate. Its pathway is cofactor biosynthesis; coenzyme A biosynthesis; CoA from (R)-pantothenate: step 4/5. Its function is as follows. Reversibly transfers an adenylyl group from ATP to 4'-phosphopantetheine, yielding dephospho-CoA (dPCoA) and pyrophosphate. This is Phosphopantetheine adenylyltransferase from Bacillus velezensis (strain DSM 23117 / BGSC 10A6 / LMG 26770 / FZB42) (Bacillus amyloliquefaciens subsp. plantarum).